Here is a 296-residue protein sequence, read N- to C-terminus: Ribosomal RNA small subunit methyltransferase A (296 aa).

Residues Asn-32, Leu-34, Gly-59, Glu-80, Asp-105, and Asn-130 each contribute to the S-adenosyl-L-methionine site.

It belongs to the class I-like SAM-binding methyltransferase superfamily. rRNA adenine N(6)-methyltransferase family. RsmA subfamily.

The protein localises to the cytoplasm. The enzyme catalyses adenosine(1518)/adenosine(1519) in 16S rRNA + 4 S-adenosyl-L-methionine = N(6)-dimethyladenosine(1518)/N(6)-dimethyladenosine(1519) in 16S rRNA + 4 S-adenosyl-L-homocysteine + 4 H(+). In terms of biological role, specifically dimethylates two adjacent adenosines (A1518 and A1519) in the loop of a conserved hairpin near the 3'-end of 16S rRNA in the 30S particle. May play a critical role in biogenesis of 30S subunits. The chain is Ribosomal RNA small subunit methyltransferase A from Lactiplantibacillus plantarum (strain ATCC BAA-793 / NCIMB 8826 / WCFS1) (Lactobacillus plantarum).